We begin with the raw amino-acid sequence, 2410 residues long: Coprinoferrin synthetase (2410 aa).

Residues 237-646 form an adenylation 1 region; the sequence is LERRAKTNPH…GRIDTQIKVR (410 aa). Residues 783 to 860 enclose the Carrier 1 domain; sequence RDCTPLEAEV…DIAQLVHVST (78 aa). An O-(pantetheine 4'-phosphoryl)serine modification is found at serine 820. Residues 891-1260 form a condensation 1 region; that stretch reads DILPPFPVQE…SVEAVVNVHD (370 aa). The tract at residues 1298–1317 is disordered; the sequence is ELPLPSRRSPEPVRKVNDDE. A compositionally biased stretch (basic and acidic residues) spans 1305–1314; that stretch reads RSPEPVRKVN. The 77-residue stretch at 1324-1400 folds into the Carrier 2 domain; that stretch reads LLDPVVVADL…RLARVVSNNK (77 aa). Serine 1361 carries the O-(pantetheine 4'-phosphoryl)serine modification. Residues 1436-1839 form a condensation 2 region; sequence IIPSTALQSG…RIGRTFSVPS (404 aa). Positions 1858–1932 constitute a Carrier 3 domain; that stretch reads VQAGIIHPVL…DLVLQATEIK (75 aa). Serine 1893 bears the O-(pantetheine 4'-phosphoryl)serine mark. The interval 1992–2315 is condensation 3; the sequence is FQYLFTFKLP…TPIFNVNVNV (324 aa).

Belongs to the NRP synthetase family.

It functions in the pathway siderophore biosynthesis. Its function is as follows. Nonribosomal peptide synthase; part of the gene cluster that mediates the biosynthesis of coprinoferrin, an acylated tripeptide hydroxamate siderophore. The biosynthesis of coprinoferrin depends on the hydroxylation of ornithine to N(5)-hydroxyornithine, catalyzed by the monooxygenase cpf2. The second step, the acylation of N(5)-hydroxy-L-ornithine to yield N(5)-hexanoyl-N(5)-hydroxyl-L-ornithine is catalyzed by a not yet identified acyltransferase. Finally, assembly of coprinoferrin is catalyzed by the nonribosomal peptide synthase (NRPS) cpf1 via amide bond formation between three N(5)-hexanoyl-N(5)-hydroxyl-L-ornithine molecules to release the linear trimer. Interestingly, proteins seemingly not directly related to biosynthesis, such as transcription factors, replication factors, and autophagy-related proteins, are conserved among the clusters homologous to the coprinoferrin cluster, suggesting that the cluster may also play developmental and cell biological functions. This is Coprinoferrin synthetase from Coprinopsis cinerea (strain Okayama-7 / 130 / ATCC MYA-4618 / FGSC 9003) (Inky cap fungus).